The following is a 638-amino-acid chain: MKSVHSSPQNTSHTIMTFYPTMEEFADFNTYVAYMESQGAHRAGLAKVIPPKEWKARQMYDDIEDILIATPLQQVTSGQGGVFTQYHKKKKAMRVGQYRHLANSKKYQTPPHQNFADLEQRYWKSHPGNPPIYGADISGSLFEESTKQWNLGHLGTILDLLEQECGVVIEGVNTPYLYFGMWKTTFAWHTEDMDLYSINYLHFGEPKTWYVVPPEHGQRLECLARELFPGNSRGCEGFLRHKVALISPTVLKKNGIPFNRMTQEAGEFMVTFPYGYHAGFNHGFNCAEAINFATPRWIDYGKVASQCSCGEARVTFSMDAFVRILQPESYELWKHRQDLTVVDYMEPRVAESQEPSNWREDIALRRAALGLRHLRNHITSCPTRTVAPRLCYNPKGGGTDAVPGSAIQALETSAWVLPPSTGRWGPCRGCGRGRGRGRGRGRRPRELGTEETTVQSAAKRRLSVGTGSRAPGRKPQLQFADEALTDKPAPLSGGLPHFAKASGCCCAPDLQPLGPPLDPDEPMHPGPCLLSLDSTASSLPLVVPMTPPSVTVPLITLSRDTGGDWKSPVNLAKVVAMDHSYASRVPVPTKFSRISWAPDSSAGAKARQRYATEFGDIFLQCMINPLDPWPLNMVSNVK.

The JmjN domain maps to 15-57 (IMTFYPTMEEFADFNTYVAYMESQGAHRAGLAKVIPPKEWKAR). Y133 is a 2-oxoglutarate binding site. The JmjC domain maps to 143–309 (EESTKQWNLG…YGKVASQCSC (167 aa)). 2 residues coordinate Fe cation: H189 and E191. The 2-oxoglutarate site is built by N199 and K207. Residues C235 and H241 each coordinate Zn(2+). A 2-oxoglutarate-binding site is contributed by K242. H277 contributes to the Fe cation binding site. The Zn(2+) site is built by C307 and C309. Residues 426–474 (PCRGCGRGRGRGRGRGRRPRELGTEETTVQSAAKRRLSVGTGSRAPGRK) form a disordered region. A compositionally biased stretch (basic residues) spans 431-443 (GRGRGRGRGRGRR).

Belongs to the JHDM3 histone demethylase family. It depends on Fe(2+) as a cofactor.

The protein resides in the nucleus. It catalyses the reaction N(6),N(6),N(6)-trimethyl-L-lysyl(9)-[histone H3] + 2 2-oxoglutarate + 2 O2 = N(6)-methyl-L-lysyl(9)-[histone H3] + 2 formaldehyde + 2 succinate + 2 CO2. In terms of biological role, probable histone demethylase that specifically demethylates 'Lys-9' of histone H3, thereby playing a central role in histone code. The protein is Probable lysine-specific demethylase 4F of Homo sapiens (Human).